The following is a 654-amino-acid chain: Fructose-1,6-bisphosphatase class 3 (654 aa).

Positions 288–307 (NPAFKPKKRPDKHERLTQRE) are disordered. Over residues 298–307 (DKHERLTQRE) the composition is skewed to basic and acidic residues.

It belongs to the FBPase class 3 family. Mn(2+) serves as cofactor.

It catalyses the reaction beta-D-fructose 1,6-bisphosphate + H2O = beta-D-fructose 6-phosphate + phosphate. It functions in the pathway carbohydrate biosynthesis; gluconeogenesis. The protein is Fructose-1,6-bisphosphatase class 3 of Staphylococcus aureus (strain Mu3 / ATCC 700698).